The chain runs to 131 residues: Small ribosomal subunit protein uS8 (131 aa).

It belongs to the universal ribosomal protein uS8 family. As to quaternary structure, part of the 30S ribosomal subunit. Contacts proteins S5 and S12.

Functionally, one of the primary rRNA binding proteins, it binds directly to 16S rRNA central domain where it helps coordinate assembly of the platform of the 30S subunit. The protein is Small ribosomal subunit protein uS8 of Ruthia magnifica subsp. Calyptogena magnifica.